The primary structure comprises 159 residues: Protein-export protein SecB (159 aa).

Belongs to the SecB family. In terms of assembly, homotetramer, a dimer of dimers. One homotetramer interacts with 1 SecA dimer.

Its subcellular location is the cytoplasm. Its function is as follows. One of the proteins required for the normal export of preproteins out of the cell cytoplasm. It is a molecular chaperone that binds to a subset of precursor proteins, maintaining them in a translocation-competent state. It also specifically binds to its receptor SecA. This is Protein-export protein SecB from Shewanella amazonensis (strain ATCC BAA-1098 / SB2B).